A 359-amino-acid polypeptide reads, in one-letter code: 3-dehydroquinate synthase (359 aa).

NAD(+)-binding positions include 71–76 (DGEAYK), 105–109 (GVIGD), 129–130 (TT), lysine 142, and lysine 151. Residues glutamate 184, histidine 247, and histidine 264 each contribute to the Zn(2+) site.

Belongs to the sugar phosphate cyclases superfamily. Dehydroquinate synthase family. The cofactor is Co(2+). Zn(2+) is required as a cofactor. NAD(+) serves as cofactor.

The protein resides in the cytoplasm. It catalyses the reaction 7-phospho-2-dehydro-3-deoxy-D-arabino-heptonate = 3-dehydroquinate + phosphate. It functions in the pathway metabolic intermediate biosynthesis; chorismate biosynthesis; chorismate from D-erythrose 4-phosphate and phosphoenolpyruvate: step 2/7. Functionally, catalyzes the conversion of 3-deoxy-D-arabino-heptulosonate 7-phosphate (DAHP) to dehydroquinate (DHQ). The sequence is that of 3-dehydroquinate synthase from Burkholderia mallei (strain NCTC 10247).